Here is a 142-residue protein sequence, read N- to C-terminus: SLSDKDKNTVRALWAKISKSADVIGAEALARMLTVYPQTKTYFTHWTDLSPSSTSVKNHGKNIMVGVSLAVSKMDDLTAGLLELSEKHAFQLRVDPANFKLLSHCLLVVISIMFPKEFGPEVHVSVDKFFANLALALSERYR.

Position 1 is an N-acetylserine (Ser-1). The 142-residue stretch at 1 to 142 folds into the Globin domain; the sequence is SLSDKDKNTV…LALALSERYR (142 aa). His-59 provides a ligand contact to O2. His-88 is a heme b binding site.

The protein belongs to the globin family. In terms of assembly, heterotetramer of two alpha chains and two beta chains. Can form polymers. As to expression, red blood cells.

Its function is as follows. Involved in oxygen transport from gills to the various peripheral tissues. The protein is Hemoglobin subunit alpha (hba) of Chelidonichthys kumu (Bluefin gurnard).